A 443-amino-acid chain; its full sequence is Regulator of sigma E protease (443 aa).

H21 is a binding site for Zn(2+). The active site involves E22. H25 serves as a coordination point for Zn(2+). Residues 98–118 (FVIIAGPLANFIFAIFAYWVI) traverse the membrane as a helical segment. 2 consecutive PDZ domains span residues 106–185 (ANFI…SPFN) and 198–287 (NWTF…TPVR). Helical transmembrane passes span 369–389 (LVYF…MNLF) and 423–443 (IGAA…FLRL).

It belongs to the peptidase M50B family. In terms of assembly, interacts with RseA. Requires Zn(2+) as cofactor.

It localises to the cell inner membrane. Functionally, a site-2 regulated intramembrane protease (S2P) that cleaves a peptide bond in the transmembrane region of RseA. Part of a regulated intramembrane proteolysis (RIP) cascade. Acts on DegS-cleaved RseA to release the cytoplasmic domain of RseA. This provides the cell with sigma-E (RpoE) activity through the proteolysis of RseA. This Haemophilus influenzae (strain ATCC 51907 / DSM 11121 / KW20 / Rd) protein is Regulator of sigma E protease (rsep).